Reading from the N-terminus, the 131-residue chain is Profilin LP04 (131 aa).

This sequence belongs to the profilin family. Occurs in many kinds of cells as a complex with monomeric actin in a 1:1 ratio.

It is found in the cytoplasm. The protein localises to the cytoskeleton. Its function is as follows. Binds to actin and affects the structure of the cytoskeleton. At high concentrations, profilin prevents the polymerization of actin, whereas it enhances it at low concentrations. By binding to PIP2, it inhibits the formation of IP3 and DG. The polypeptide is Profilin LP04 (Oryza sativa subsp. indica (Rice)).